The primary structure comprises 509 residues: Cobyric acid synthase (509 aa).

The 198-residue stretch at 262–459 (EIKVGIIKLP…IHGIFENDNW (198 aa)) folds into the GATase cobBQ-type domain. The active-site Nucleophile is the Cys343. Residue His451 is part of the active site.

This sequence belongs to the CobB/CobQ family. CobQ subfamily.

Its pathway is cofactor biosynthesis; adenosylcobalamin biosynthesis. In terms of biological role, catalyzes amidations at positions B, D, E, and G on adenosylcobyrinic A,C-diamide. NH(2) groups are provided by glutamine, and one molecule of ATP is hydrogenolyzed for each amidation. The sequence is that of Cobyric acid synthase from Prochlorococcus marinus (strain AS9601).